Consider the following 691-residue polypeptide: Calcium-binding and coiled-coil domain-containing protein 1 (691 aa).

Positions 1–30 (MEESPLSRAPSRGGVNFLNVARTYIPNTKV) are p300 KIX-binding. Positions 1-190 (MEESPLSRAP…VQELERALAT (190 aa)) are N-terminal AD (CTNNB1 binding site). Phosphoserine is present on Ser-4. Positions 45–125 (SDWIGIFKVE…FQFREPRPMD (81 aa)) are interaction with GATA1. 3 coiled-coil regions span residues 145 to 205 (KATV…YKGI), 232 to 339 (ELED…AELE), and 417 to 514 (QSVE…ADEK). A C-terminal AD (CTNNB1 binding site); interaction with CCAR1 region spans residues 501-691 (RKLEARLEKV…FSTQDPFTFE (191 aa)). Residues 514–606 (KWNEDATTED…SEAEDEKSVL (93 aa)) form a disordered region. The segment at 653 to 679 (WKECPICKERFPAESDKDALEDHMDGH) adopts a UBZ1-type zinc-finger fold. Positions 656, 659, 675, and 679 each coordinate Zn(2+).

The protein belongs to the CALCOCO family. As to quaternary structure, part of a calphoglin complex consisting of CALCOCO1, PPA1 and PGM. Interacts with the bHLH-PAS domains of GRIP1, AHR and ARNT. Interacts with CTNNB1 via both its N- and C-terminal regions. Interacts with EP300. Interacts with CCAR1 (via N-terminus) and GATA1.

The protein resides in the cytoplasm. Its subcellular location is the nucleus. Its function is as follows. Functions as a coactivator for aryl hydrocarbon and nuclear receptors (NR). Recruited to promoters through its contact with the N-terminal basic helix-loop-helix-Per-Arnt-Sim (PAS) domain of transcription factors or coactivators, such as NCOA2. During ER-activation acts synergistically in combination with other NCOA2-binding proteins, such as EP300, CREBBP and CARM1. Involved in the transcriptional activation of target genes in the Wnt/CTNNB1 pathway. Functions as a secondary coactivator in LEF1-mediated transcriptional activation via its interaction with CTNNB1. Coactivator function for nuclear receptors and LEF1/CTNNB1 involves differential utilization of two different activation regions. In association with CCAR1 enhances GATA1- and MED1-mediated transcriptional activation from the gamma-globin promoter during erythroid differentiation of K562 erythroleukemia cells. In terms of biological role, seems to enhance inorganic pyrophosphatase thus activating phosphogluomutase (PMG). Probably functions as a component of the calphoglin complex, which is involved in linking cellular metabolism (phosphate and glucose metabolism) with other core functions including protein synthesis and degradation, calcium signaling and cell growth. The protein is Calcium-binding and coiled-coil domain-containing protein 1 (CALCOCO1) of Homo sapiens (Human).